The following is a 123-amino-acid chain: Small ribosomal subunit protein uS12cz/uS12cy (123 aa).

It belongs to the universal ribosomal protein uS12 family. As to quaternary structure, part of the 30S ribosomal subunit.

It localises to the plastid. The protein localises to the chloroplast. Its function is as follows. With S4 and S5 plays an important role in translational accuracy. Located at the interface of the 30S and 50S subunits. The sequence is that of Small ribosomal subunit protein uS12cz/uS12cy (rps12-A) from Populus alba (White poplar).